Consider the following 451-residue polypeptide: UPF0210 protein CA_C0479 (451 aa).

The protein belongs to the UPF0210 family. In terms of assembly, homodimer.

In Clostridium acetobutylicum (strain ATCC 824 / DSM 792 / JCM 1419 / IAM 19013 / LMG 5710 / NBRC 13948 / NRRL B-527 / VKM B-1787 / 2291 / W), this protein is UPF0210 protein CA_C0479.